We begin with the raw amino-acid sequence, 457 residues long: Proline-specific permease ProY (457 aa).

Over 1 to 17 (MESKNKLKRGLSTRHIR) the chain is Cytoplasmic. 2 helical membrane-spanning segments follow: residues 18–38 (FMALGSAIGTGLFYGSADAIK) and 39–59 (MAGPSVLLAYIIGGIAAYIIM). At 60 to 84 (RALGEMSVHNPAASSFSRYAQENLG) the chain is on the cytoplasmic side. The helical transmembrane segment at 85–105 (PLAGYITGWTYCFEILIVAIA) threads the bilayer. The Periplasmic segment spans residues 106–113 (DVTAFGIY). Residues 114–134 (MGVWFPTVPHWIWVLSVVLII) form a helical membrane-spanning segment. Over 135–156 (CAVNLMSVKVFGELEFWFSFFK) the chain is Cytoplasmic. The helical transmembrane segment at 157–177 (VATIIIMIVAGFGIIIWGIGN) threads the bilayer. The Periplasmic segment spans residues 178–197 (GGQPTGIHNLWSNGGFFSNG). The chain crosses the membrane as a helical span at residues 198–218 (WLGMVMSLQMVMFAYGGIEII). Residues 219–242 (GITAGEAKDPEKSIPRAINSVPMR) are Cytoplasmic-facing. The helical transmembrane segment at 243-263 (ILVFYVGTLFVIMSIYPWNQV) threads the bilayer. At 264 to 277 (GTAGSPFVLTFQHM) the chain is on the periplasmic side. The helical transmembrane segment at 278–298 (GITFAASILNFVVLTASLSAI) threads the bilayer. The Cytoplasmic portion of the chain corresponds to 299–331 (NSDVFGVGRMLHGMAEQGSAPKIFSKTSRRGIP). The chain crosses the membrane as a helical span at residues 332–352 (WVTVLVMTTALLFAVYLNYIM). Residues 353–355 (PEN) are Periplasmic-facing. The helical transmembrane segment at 356–376 (VFLVIASLATFATVWVWIMIL) threads the bilayer. The Cytoplasmic segment spans residues 377-399 (LSQIAFRRRLPPEEVKALKFKVP). A helical transmembrane segment spans residues 400–420 (GGVATTIGGLIFLLFIIGLIG). The Periplasmic portion of the chain corresponds to 421-424 (YHPD). The chain crosses the membrane as a helical span at residues 425 to 445 (TRISLYVGFAWIVVLLIGWMF). Over 446-457 (KRRHDRQLAENQ) the chain is Cytoplasmic.

This sequence belongs to the amino acid-polyamine-organocation (APC) superfamily. Amino acid transporter (AAT) (TC 2.A.3.1) family.

The protein localises to the cell inner membrane. Functionally, permease that is involved in the transport across the cytoplasmic membrane of proline. In Escherichia coli O157:H7, this protein is Proline-specific permease ProY (proY).